We begin with the raw amino-acid sequence, 169 residues long: Nascent polypeptide-associated complex subunit alpha (169 aa).

Positions 14-78 (NKNEKKAREM…AKIDNFSQKL (65 aa)) constitute an NAC-A/B domain. The disordered stretch occupies residues 85-128 (IQSVSKSPEEIQKDMQLAADQAGDESAKPAAAAEEDDEAPVDAG). Residues 130 to 169 (LSAEDIELVASQANVSKNKAIKALKEHNGDIVNAIMALSK) enclose the UBA domain.

The protein belongs to the NAC-alpha family. Part of the nascent polypeptide-associated complex (NAC), consisting of EGD2 and EGD1. NAC associates with ribosomes via EGD1.

The protein resides in the cytoplasm. It is found in the nucleus. Component of the nascent polypeptide-associated complex (NAC), a dynamic component of the ribosomal exit tunnel, protecting the emerging polypeptides from interaction with other cytoplasmic proteins to ensure appropriate nascent protein targeting. The NAC complex also promotes mitochondrial protein import by enhancing productive ribosome interactions with the outer mitochondrial membrane and blocks the inappropriate interaction of ribosomes translating non-secretory nascent polypeptides with translocation sites in the membrane of the endoplasmic reticulum. EGD2 may also be involved in transcription regulation. In Vanderwaltozyma polyspora (strain ATCC 22028 / DSM 70294 / BCRC 21397 / CBS 2163 / NBRC 10782 / NRRL Y-8283 / UCD 57-17) (Kluyveromyces polysporus), this protein is Nascent polypeptide-associated complex subunit alpha (EGD2).